The chain runs to 287 residues: 2-dehydro-3-deoxyphosphooctonate aldolase (287 aa).

This sequence belongs to the KdsA family.

Its subcellular location is the cytoplasm. It carries out the reaction D-arabinose 5-phosphate + phosphoenolpyruvate + H2O = 3-deoxy-alpha-D-manno-2-octulosonate-8-phosphate + phosphate. It participates in carbohydrate biosynthesis; 3-deoxy-D-manno-octulosonate biosynthesis; 3-deoxy-D-manno-octulosonate from D-ribulose 5-phosphate: step 2/3. It functions in the pathway bacterial outer membrane biogenesis; lipopolysaccharide biosynthesis. This Rhodopseudomonas palustris (strain TIE-1) protein is 2-dehydro-3-deoxyphosphooctonate aldolase.